The chain runs to 272 residues: Sugar-phosphatase AraL (272 aa).

The protein belongs to the HAD-like hydrolase superfamily. The cofactor is Mg(2+).

The enzyme catalyses sugar phosphate + H2O = sugar + phosphate.. The catalysed reaction is O-phospho-L-serine + H2O = L-serine + phosphate. It catalyses the reaction O-phospho-D-serine + H2O = D-serine + phosphate. Its function is as follows. Catalyzes the dephosphorylation of C5 and C6 carbon sugars in vitro. Catalyzes the dephosphorylation of 3'-AMP and phosphoserine in vitro. This chain is Sugar-phosphatase AraL (araL), found in Bacillus subtilis (strain 168).